Reading from the N-terminus, the 774-residue chain is Beta-D-xylosidase 1 (774 aa).

The signal sequence occupies residues 1 to 30 (MSCYNKALLIGNKVVVILVFLLCLVHSSES). An N-linked (GlcNAc...) asparagine glycan is attached at Asn131. The active site involves Asp296. Asn658 is a glycosylation site (N-linked (GlcNAc...) asparagine).

Belongs to the glycosyl hydrolase 3 family. As to expression, expressed in leaves, stems, seedlings, roots, inflorescences, siliques and developing seeds. Expressed in the vasculature of the roots, leaves, flowers and silique. Expressed in tissues undergoing secondary cell wall thickening such as protoxylem, metaxylem, intrafascicular cambium and fibers.

It localises to the secreted. Its subcellular location is the extracellular space. The protein resides in the extracellular matrix. It carries out the reaction Hydrolysis of terminal non-reducing alpha-L-arabinofuranoside residues in alpha-L-arabinosides.. In terms of biological role, involved in pectic arabinan modification in mucilage secretory cells. Also acts as a beta-D-xylosidase during the remodeling of xylans in vascular development. This Arabidopsis thaliana (Mouse-ear cress) protein is Beta-D-xylosidase 1 (BXL1).